A 184-amino-acid chain; its full sequence is Photosystem I assembly protein Ycf4 (184 aa).

The next 2 helical transmembrane spans lie at 19–39 (ISNL…FLVG) and 57–77 (IIFF…LFIS).

This sequence belongs to the Ycf4 family.

Its subcellular location is the plastid thylakoid membrane. Functionally, seems to be required for the assembly of the photosystem I complex. This Cuscuta exaltata (Tall dodder) protein is Photosystem I assembly protein Ycf4.